We begin with the raw amino-acid sequence, 428 residues long: Putative oxidoreductase YteT (428 aa).

The N-terminal stretch at 1 to 23 (MKNIVFCGLSSRAFSMFIKPLME) is a signal peptide.

The protein belongs to the Gfo/Idh/MocA family.

May play a role in the degradation of type I rhamnogalacturonan derived from plant cell walls. The polypeptide is Putative oxidoreductase YteT (yteT) (Bacillus subtilis (strain 168)).